The sequence spans 382 residues: MGAFLDKPKMEKHNAQGQGNGLRYGLSSMQGWRVEMEDAHTAVIGLPSGLETWSFFAVYDGHAGSQVAKYCCEHLLDHITNNQDFRGSAGAPSVENVKNGIRTGFLEIDEHMRVMSEKKHGADRSGSTAVGVLISPQHTYFINCGDSRGLLCRNRKVHFFTQDHKPSNPLEKERIQNAGGSVMIQRVNGSLAVSRALGDFDYKCVHGKGPTEQLVSPEPEVHDIERSEEDDQFIILACDGIWDVMGNEELCDFVRSRLEVTDDLEKVCNEVVDTCLYKGSRDNMSVILICFPSAPKVSAEAVKKEAELDKYLESRVEEIIKKQVEGVPDLVHVMRTLASENIPSLPPGGELASKRNVIEAVYNRLNPYKNDDTDSASTDDMW.

Gly2 carries the N-myristoyl glycine lipid modification. The 269-residue stretch at 23 to 291 (RYGLSSMQGW…DNMSVILICF (269 aa)) folds into the PPM-type phosphatase domain. Residues Asp60, Gly61, Asp239, and Asp282 each coordinate Mn(2+). A phosphoserine mark is found at Ser375 and Ser377.

It belongs to the PP2C family. As to quaternary structure, monomer. Interacts with SMAD2; the interaction dephosphorylates SMAD2 in its C-terminal SXS motif resulting in disruption of the SMAD2/SMAD4 complex, SMAD2 nuclear export and termination of the TGF-beta-mediated signaling. Interacts with SMAD2; the interaction dephosphorylates SMAD2 in its C-terminal SXS motif resulting in disruption of the SMAD2/SMAD4 complex, SMAD2 nuclear export and termination of the TGF-beta-mediated signaling. Interacts with the phosphorylated form of IKBKB/IKKB. Mg(2+) is required as a cofactor. Requires Mn(2+) as cofactor. In terms of processing, N-myristoylation is essential for the recognition of its substrates for dephosphorylation.

It is found in the nucleus. Its subcellular location is the cytoplasm. The protein resides in the cytosol. It localises to the membrane. It catalyses the reaction O-phospho-L-seryl-[protein] + H2O = L-seryl-[protein] + phosphate. The enzyme catalyses O-phospho-L-threonyl-[protein] + H2O = L-threonyl-[protein] + phosphate. In terms of biological role, enzyme with a broad specificity. Negatively regulates TGF-beta signaling through dephosphorylating SMAD2 and SMAD3, resulting in their dissociation from SMAD4, nuclear export of the SMADs and termination of the TGF-beta-mediated signaling. Dephosphorylates PRKAA1 and PRKAA2. Plays an important role in the termination of TNF-alpha-mediated NF-kappa-B activation through dephosphorylating and inactivating IKBKB/IKKB. The chain is Protein phosphatase 1A (Ppm1a) from Mus musculus (Mouse).